A 116-amino-acid chain; its full sequence is Nucleoid-associated protein EUBELI_02017 (116 aa).

Residues Met1 to Pro12 are compositionally biased toward gly residues. A disordered region spans residues Met1–Ser42. The span at Gly13 to Gln26 shows a compositional bias: low complexity.

The protein belongs to the YbaB/EbfC family. Homodimer.

The protein resides in the cytoplasm. The protein localises to the nucleoid. In terms of biological role, binds to DNA and alters its conformation. May be involved in regulation of gene expression, nucleoid organization and DNA protection. The polypeptide is Nucleoid-associated protein EUBELI_02017 (Lachnospira eligens (strain ATCC 27750 / DSM 3376 / VPI C15-48 / C15-B4) (Eubacterium eligens)).